Consider the following 74-residue polypeptide: UPF0741 protein BcerKBAB4_5177 (74 aa).

Belongs to the UPF0741 family.

The protein is UPF0741 protein BcerKBAB4_5177 of Bacillus mycoides (strain KBAB4) (Bacillus weihenstephanensis).